Consider the following 121-residue polypeptide: SLFELGKMILQETGKNPAKSYGAYGCNCGVLGRGQPKDATDRCCYVHKCCYKKLTGCDPKKDRYSYSWKDKTIVCGENNPCLKELCECDKAVAICLRENLGTYNKKYRYHLKPFCKKADPC.

Cystine bridges form between Cys26/Cys115, Cys28/Cys44, Cys43/Cys95, Cys49/Cys121, Cys50/Cys88, Cys57/Cys81, and Cys75/Cys86. An important for membrane-damaging activities in eukaryotes and bacteria; heparin-binding region spans residues 105–117 (KKYRYHLKPFCKK).

It belongs to the phospholipase A2 family. Group II subfamily. K49 sub-subfamily. In terms of assembly, homodimer; non-covalently linked (probable alternative/compact dimer conformation in solution). In terms of tissue distribution, expressed by the venom gland.

The protein resides in the secreted. With respect to regulation, heparin inhibits the neuromuscular effect, myotoxin activity and edema-inducing effects. Bromophenacyl bromide (BPB) inhibits the neuromuscular effect, the myotoxin activity and edema-inducing effects. Its function is as follows. Snake venom phospholipase A2 (PLA2) that lacks enzymatic activity. Is myotoxic and displays edema-inducing activity. Displays bactericidal activity and promotes the blockage of the neuromuscular contraction of the chick biventer cervicis muscle. Also disrupts artificial membranes, and provokes tissue damages characterized by edema, necrosis and inflammation. May act as pro-inflammatory mediators, inducing metalloproteinase and cytokine production from the inflammatory and satellite cells. A model of myotoxic mechanism has been proposed: an apo Lys49-PLA2 is activated by the entrance of a hydrophobic molecule (e.g. fatty acid) at the hydrophobic channel of the protein leading to a reorientation of a monomer. This reorientation causes a transition between 'inactive' to 'active' states, causing alignment of C-terminal and membrane-docking sites (MDoS) side-by-side and putting the membrane-disruption sites (MDiS) in the same plane, exposed to solvent and in a symmetric position for both monomers. The MDoS region stabilizes the toxin on membrane by the interaction of charged residues with phospholipid head groups. Subsequently, the MDiS region destabilizes the membrane with penetration of hydrophobic residues. This insertion causes a disorganization of the membrane, allowing an uncontrolled influx of ions (i.e. calcium and sodium), and eventually triggering irreversible intracellular alterations and cell death. This Bothrops pauloensis (Neuwied's lancehead) protein is Basic phospholipase A2 homolog BnSP-7.